We begin with the raw amino-acid sequence, 202 residues long: Cytochrome c oxidase assembly protein CtaG (202 aa).

The Cytoplasmic segment spans residues 1 to 13 (MSDKAAAPKKQGR). A helical; Signal-anchor for type II membrane protein membrane pass occupies residues 14 to 36 (NNGAVVLMCLSFVFGMGAMSYAA). The Periplasmic portion of the chain corresponds to 37–202 (VPLYRIFCQV…GGAEKVEKKL (166 aa)). Residues 183 to 202 (EGPKPLASNEGGAEKVEKKL) form a disordered region.

It belongs to the COX11/CtaG family.

The protein localises to the cell inner membrane. Functionally, exerts its effect at some terminal stage of cytochrome c oxidase synthesis, probably by being involved in the insertion of the copper B into subunit I. In Rhizobium etli (strain CIAT 652), this protein is Cytochrome c oxidase assembly protein CtaG.